Reading from the N-terminus, the 194-residue chain is Holliday junction branch migration complex subunit RuvA (194 aa).

The domain I stretch occupies residues 1 to 63 (MFEYLKGTVA…EDELSLYGFM (63 aa)). The tract at residues 64-142 (SIEELDMFQK…KTNVVYDYTL (79 aa)) is domain II. Residues 143 to 151 (FNDDHKDDD) form a flexible linker region. The segment at 151–194 (DEAVQALMALGYSKLESEKAVEAVRDMSLGTEDVIKRALKWLMK) is domain III.

The protein belongs to the RuvA family. As to quaternary structure, homotetramer. Forms an RuvA(8)-RuvB(12)-Holliday junction (HJ) complex. HJ DNA is sandwiched between 2 RuvA tetramers; dsDNA enters through RuvA and exits via RuvB. An RuvB hexamer assembles on each DNA strand where it exits the tetramer. Each RuvB hexamer is contacted by two RuvA subunits (via domain III) on 2 adjacent RuvB subunits; this complex drives branch migration. In the full resolvosome a probable DNA-RuvA(4)-RuvB(12)-RuvC(2) complex forms which resolves the HJ.

It is found in the cytoplasm. In terms of biological role, the RuvA-RuvB-RuvC complex processes Holliday junction (HJ) DNA during genetic recombination and DNA repair, while the RuvA-RuvB complex plays an important role in the rescue of blocked DNA replication forks via replication fork reversal (RFR). RuvA specifically binds to HJ cruciform DNA, conferring on it an open structure. The RuvB hexamer acts as an ATP-dependent pump, pulling dsDNA into and through the RuvAB complex. HJ branch migration allows RuvC to scan DNA until it finds its consensus sequence, where it cleaves and resolves the cruciform DNA. The sequence is that of Holliday junction branch migration complex subunit RuvA from Alkaliphilus oremlandii (strain OhILAs) (Clostridium oremlandii (strain OhILAs)).